A 108-amino-acid chain; its full sequence is Protein FATTY ACID EXPORT 7 (108 aa).

The next 3 membrane-spanning stretches (helical) occupy residues 32–52 (ISLV…TELP), 55–75 (PVLA…MMGS), and 85–105 (PAGL…HGLI).

It belongs to the TMEM14 family.

It localises to the membrane. In terms of biological role, may be involved in free fatty acids export. The protein is Protein FATTY ACID EXPORT 7 of Arabidopsis thaliana (Mouse-ear cress).